The chain runs to 658 residues: Glycogen debranching enzyme (658 aa).

Catalysis depends on aspartate 336, which acts as the Nucleophile. Glutamate 371 acts as the Proton donor in catalysis. Positions 459-483 are disordered; sequence EANGEENRDGTNSNYSDNHGKEGLG.

It belongs to the glycosyl hydrolase 13 family.

The enzyme catalyses Hydrolysis of (1-&gt;6)-alpha-D-glucosidic linkages to branches with degrees of polymerization of three or four glucose residues in limit dextrin.. The protein operates within glycan degradation; glycogen degradation. Removes maltotriose and maltotetraose chains that are attached by 1,6-alpha-linkage to the limit dextrin main chain, generating a debranched limit dextrin. The chain is Glycogen debranching enzyme from Salmonella agona (strain SL483).